The sequence spans 122 residues: Large ribosomal subunit protein bL19 (122 aa).

It belongs to the bacterial ribosomal protein bL19 family.

Its function is as follows. This protein is located at the 30S-50S ribosomal subunit interface and may play a role in the structure and function of the aminoacyl-tRNA binding site. In Synechocystis sp. (strain ATCC 27184 / PCC 6803 / Kazusa), this protein is Large ribosomal subunit protein bL19 (rplS).